The following is a 62-amino-acid chain: Large ribosomal subunit protein bL28 (62 aa).

The tract at residues 1-26 (MARKCYVTGKSPKSGNNRSHALNKTK) is disordered. Over residues 11-20 (SPKSGNNRSH) the composition is skewed to polar residues.

It belongs to the bacterial ribosomal protein bL28 family.

The chain is Large ribosomal subunit protein bL28 from Exiguobacterium sibiricum (strain DSM 17290 / CCUG 55495 / CIP 109462 / JCM 13490 / 255-15).